A 212-amino-acid chain; its full sequence is Peptide methionine sulfoxide reductase MsrA (212 aa).

The span at 1-14 (MNSIDKTQRITQSD) shows a compositional bias: polar residues. A disordered region spans residues 1–21 (MNSIDKTQRITQSDALPGRST). The active site involves cysteine 52.

This sequence belongs to the MsrA Met sulfoxide reductase family.

It carries out the reaction L-methionyl-[protein] + [thioredoxin]-disulfide + H2O = L-methionyl-(S)-S-oxide-[protein] + [thioredoxin]-dithiol. It catalyses the reaction [thioredoxin]-disulfide + L-methionine + H2O = L-methionine (S)-S-oxide + [thioredoxin]-dithiol. Its function is as follows. Has an important function as a repair enzyme for proteins that have been inactivated by oxidation. Catalyzes the reversible oxidation-reduction of methionine sulfoxide in proteins to methionine. This chain is Peptide methionine sulfoxide reductase MsrA, found in Pectobacterium atrosepticum (strain SCRI 1043 / ATCC BAA-672) (Erwinia carotovora subsp. atroseptica).